The sequence spans 276 residues: MLFRSQTHVFPGVYMMVAMLVVALSGYQVQSYSAKDILADVLMTDLLNRMDKDMQVGYYDVGNEAAAGSKDNVDLVSRSEYARLCDGGSDCILQSGSASGAASHPSLRDDEFLQHSSLWGHQFISGGMGEGPNRYPTIVKNDAGLPAYCNPPNPCPEGYDMETQGGSCIVDFENTAIFSREFQAAQDCTCDNEHMFDCSEQDSADVGGDKGDLNSAVEQYIMQMGQENSLNNVNSLAKKAGYPVMPDPRLDDAVINPFLQGDRLPIAAKKGNLLFH.

Cysteine 155 and cysteine 168 are joined by a disulfide.

It belongs to the 7B2 family. As to quaternary structure, interacts with amon/PC2 early in the secretory pathway. Dissociation occurs at later stages.

It localises to the secreted. Functionally, acts as a molecular chaperone for neuroendocrine convertase amon/PC2, preventing its premature activation in the regulated secretory pathway. Binds to inactive amon in the endoplasmic reticulum and facilitates its transport from there to later compartments of the secretory pathway where it is proteolytically matured and activated. Also required for cleavage of amon. This Drosophila melanogaster (Fruit fly) protein is Neuroendocrine protein 7B2.